A 267-amino-acid chain; its full sequence is MARFLTLCTWLLLLGPGLLATVRAECSQDCATCSYRLVRPADINFLACVMECEGKLPSLKIWETCKELLQLSKPELPQDGTSTLRENSKPEESHLLAKRYGGFMKRYGGFMKKMDELYPMEPEEEANGSEILAKRYGGFMKKDAEEDDSLANSSDLLKELLETGDNRERSHHQDGSDNEEEVSKRYGGFMRGLKRSPQLEDEAKELQKRYGGFMRRVGRPEWWMDYQKRYGGFLKRFAEALPSDEEGESYSKEVPEMEKRYGGFMRF.

The first 24 residues, 1–24, serve as a signal peptide directing secretion; that stretch reads MARFLTLCTWLLLLGPGLLATVRA. Disulfide bonds link Cys-26-Cys-48, Cys-30-Cys-52, and Cys-33-Cys-65. Over residues 163 to 175 the composition is skewed to basic and acidic residues; sequence TGDNRERSHHQDG. Residues 163 to 182 form a disordered region; that stretch reads TGDNRERSHHQDGSDNEEEV. Propeptides lie at residues 196-207 and 217-227; these read SPQLEDEAKELQ and VGRPEWWMDYQ. Phosphoserine is present on Ser-251.

Belongs to the opioid neuropeptide precursor family. Post-translationally, proenkephalin-A is cleaved by CTSL to generate Met-enkephalin. In terms of processing, processed and degraded by ACE. Probably cleaved by ACE. Post-translationally, processed by ACE to generate Met-enkephalin in the nucleus accumbens of the brain. In terms of processing, the N-terminal domain contains 6 conserved cysteines thought to be involved in disulfide bonding and/or processing.

It localises to the cytoplasmic vesicle. The protein resides in the secretory vesicle. It is found in the chromaffin granule lumen. Its subcellular location is the secreted. Neuropeptide that competes with and mimic the effects of opiate drugs. They play a role in a number of physiologic functions, including pain perception and responses to stress. Its function is as follows. Met-enkephalin-Arg-Phe neuropeptide acts as a strong ligand of Mu-type opioid receptor OPRM1. Met-enkephalin-Arg-Phe-binding to OPRM1 in the nucleus accumbens of the brain increases activation of OPRM1, leading to long-term synaptic depression of glutamate release. Functionally, increases glutamate release in the striatum and decreases GABA concentration in the striatum. In terms of biological role, increases glutamate release in the striatum. The chain is Proenkephalin-A from Homo sapiens (Human).